Here is a 300-residue protein sequence, read N- to C-terminus: Iron-dependent extradiol dioxygenase (300 aa).

2 consecutive VOC domains span residues 5 to 120 (SLAY…AFHG) and 142 to 270 (GLGH…FGCE). His-145 is a Fe cation binding site. His-200, His-215, Asp-250, and Tyr-256 together coordinate substrate. His-215 contacts Fe cation. Glu-266 serves as a coordination point for Fe cation.

This sequence belongs to the extradiol ring-cleavage dioxygenase family. As to quaternary structure, homodimer. The cofactor is Fe(2+).

The enzyme catalyses 3,4-dihydroxy-9,10-secoandrosta-1,3,5(10)-triene-9,17-dione + O2 = (1E,2Z)-3-hydroxy-5,9,17-trioxo-4,5:9,10-disecoandrosta-1(10),2-dien-4-oate + H(+). Its pathway is steroid metabolism; cholesterol metabolism. Catalyzes the meta-cleavage of 3,4-dihydroxy-9,10-seconandrost-1,3,5(10)-triene-9,17-dione (3,4-DHSA) to produce 4,5-9,10-diseco-3-hydroxy-5,9,17-trioxoandrosta-1(10),2-diene-4-oic acid (4,9-DSHA). Also involved in biphenyl and polychlorinated biphenyls (PCBs) degradation. The chain is Iron-dependent extradiol dioxygenase (hsaC) from Rhodococcus jostii (strain RHA1).